A 203-amino-acid chain; its full sequence is Small ribosomal subunit protein uS4c (203 aa).

The disordered stretch occupies residues 18–42 (LPGLTSKRPKNRKDSMNMNRSSSRK). Residues 33 to 42 (MNMNRSSSRK) are compositionally biased toward polar residues. The region spanning 91-152 (MRLDNIIFRL…QPRLRAIIKK (62 aa)) is the S4 RNA-binding domain.

Belongs to the universal ribosomal protein uS4 family. As to quaternary structure, part of the 30S ribosomal subunit. Contacts protein S5. The interaction surface between S4 and S5 is involved in control of translational fidelity.

It is found in the plastid. The protein resides in the chloroplast. Its function is as follows. One of the primary rRNA binding proteins, it binds directly to 16S rRNA where it nucleates assembly of the body of the 30S subunit. With S5 and S12 plays an important role in translational accuracy. The sequence is that of Small ribosomal subunit protein uS4c (rps4) from Pinus koraiensis (Korean pine).